Here is a 127-residue protein sequence, read N- to C-terminus: Odontogenesis-associated phosphoprotein (127 aa).

The N-terminal stretch at 1-23 is a signal peptide; the sequence is MAPGFHFSWLLVSWLVVTTVKGQ.

In terms of tissue distribution, expressed in enamel organs and not expressed in the heart, kidney, or spleen.

It is found in the secreted. May promote nucleation of hydroxyapatite. The protein is Odontogenesis-associated phosphoprotein of Rattus norvegicus (Rat).